Here is a 134-residue protein sequence, read N- to C-terminus: MPPKTRASAARKPRRKANKNITVGQAHIKSTFNNTIVSITDTTGAVISWASSGEVGFKGSRKSTPYAAQMAAEQAAKRAQEHGMKKVDVFVKGPGSGRETAIRSLQAAGLEVGSIQDVTPMAHNGARPAKRRRV.

This sequence belongs to the universal ribosomal protein uS11 family. In terms of assembly, part of the 30S ribosomal subunit. Interacts with proteins S7 and S18. Binds to IF-3.

Functionally, located on the platform of the 30S subunit, it bridges several disparate RNA helices of the 16S rRNA. Forms part of the Shine-Dalgarno cleft in the 70S ribosome. The chain is Small ribosomal subunit protein uS11 from Micrococcus luteus (strain ATCC 4698 / DSM 20030 / JCM 1464 / CCM 169 / CCUG 5858 / IAM 1056 / NBRC 3333 / NCIMB 9278 / NCTC 2665 / VKM Ac-2230) (Micrococcus lysodeikticus).